Reading from the N-terminus, the 81-residue chain is uncharacterized protein (81 aa).

This is an uncharacterized protein from Autographa californica nuclear polyhedrosis virus (AcMNPV).